A 123-amino-acid chain; its full sequence is Small ribosomal subunit protein uS12 (123 aa).

D89 is subject to 3-methylthioaspartic acid. The segment at 100–123 is disordered; sequence GSLDTSGVKDRKQGRSKYGTKRPK. Residues 113-123 show a composition bias toward basic residues; it reads GRSKYGTKRPK.

The protein belongs to the universal ribosomal protein uS12 family. As to quaternary structure, part of the 30S ribosomal subunit. Contacts proteins S8 and S17. May interact with IF1 in the 30S initiation complex.

Functionally, with S4 and S5 plays an important role in translational accuracy. In terms of biological role, interacts with and stabilizes bases of the 16S rRNA that are involved in tRNA selection in the A site and with the mRNA backbone. Located at the interface of the 30S and 50S subunits, it traverses the body of the 30S subunit contacting proteins on the other side and probably holding the rRNA structure together. The combined cluster of proteins S8, S12 and S17 appears to hold together the shoulder and platform of the 30S subunit. The polypeptide is Small ribosomal subunit protein uS12 (Ectopseudomonas mendocina (strain ymp) (Pseudomonas mendocina)).